Consider the following 81-residue polypeptide: RBAK downstream neighbor protein (81 aa).

The signal sequence occupies residues 1 to 22 (MWPPLLLLLLLLPAAPVPTAKA).

The protein localises to the secreted. This is RBAK downstream neighbor protein (RBAKDN) from Homo sapiens (Human).